Consider the following 363-residue polypeptide: Ribosomal RNA large subunit methyltransferase M (363 aa).

Residues serine 194, 227–230 (CPGG), aspartate 246, aspartate 266, and aspartate 284 each bind S-adenosyl-L-methionine. Lysine 313 acts as the Proton acceptor in catalysis.

The protein belongs to the class I-like SAM-binding methyltransferase superfamily. RNA methyltransferase RlmE family. RlmM subfamily. As to quaternary structure, monomer.

The protein resides in the cytoplasm. It catalyses the reaction cytidine(2498) in 23S rRNA + S-adenosyl-L-methionine = 2'-O-methylcytidine(2498) in 23S rRNA + S-adenosyl-L-homocysteine + H(+). Its function is as follows. Catalyzes the 2'-O-methylation at nucleotide C2498 in 23S rRNA. The chain is Ribosomal RNA large subunit methyltransferase M from Haemophilus influenzae (strain PittGG).